The chain runs to 1358 residues: Phosphoinositide 3-kinase regulatory subunit 4 (1358 aa).

Glycine 2 carries the N-myristoyl glycine lipid modification. Residues 26 to 324 (FEYDKSLGST…AFPEIFYTFL (299 aa)) enclose the Protein kinase domain. Residues 32-40 (LGSTRFFKV) and lysine 53 each bind ATP. Aspartate 148 (proton acceptor) is an active-site residue. HEAT repeat units follow at residues 413 to 450 (ILLD…LVQE), 458 to 495 (IYPE…TALR), 572 to 610 (KAND…YVGW), and 612 to 648 (SSSI…LGLL). Residues serine 808, serine 813, serine 853, and serine 865 each carry the phosphoserine modification. 6 WD repeats span residues 991 to 1030 (EHKS…GKTT), 1040 to 1079 (RIGG…LPKS), 1093 to 1134 (KEDG…NAWT), 1139 to 1178 (LKSG…PISS), 1182 to 1223 (PSRA…RRLT), and 1237 to 1278 (PSPH…RSYV). The segment at 1307-1326 (KQKVGPSDDTPRRGPESLPV) is disordered. Residues 1315-1326 (DTPRRGPESLPV) show a composition bias toward basic and acidic residues. Threonine 1316 bears the Phosphothreonine mark. The stretch at 1327-1358 (GHHDIITDIATFQTTQGFIVTASRDGIVKVWK) is one WD 7 repeat.

Belongs to the protein kinase superfamily. Ser/Thr protein kinase family. As to quaternary structure, component of the PI3K (PI3KC3/PI3K-III/class III phosphatidylinositol 3-kinase) complex the core of which is composed of the catalytic subunit PIK3C3, the regulatory subunit PIK3R4 and BECN1 associating with additional regulatory/auxiliary subunits to form alternative complex forms. Alternative complex forms containing a fourth regulatory subunit in a mutually exclusive manner are PI3K complex I (PI3KC3-C1) containing ATG14, and PI3K complex II (PI3KC3-C2) containing UVRAG. PI3KC3-C1 displays a V-shaped architecture with PIK3R4 serving as a bridge between PIK3C3 and the ATG14:BECN1 subcomplex. Both, PI3KC3-C1 and PI3KC3-C2, can associate with further regulatory subunits, such as RUBCN, SH3GLB1/Bif-1, AMBRA1 and NRBF2. PI3KC3-C1 probably associates with PIK3CB. Interacts with RAB7A in the presence of PIK3C3/VPS34. Interacts with NRBF2. Interacts with ARMC3. It depends on Mn(2+) as a cofactor. Post-translationally, myristoylated. Probably autophosphorylated.

It localises to the late endosome. It is found in the cytoplasmic vesicle. The protein resides in the autophagosome. Its subcellular location is the membrane. It catalyses the reaction L-seryl-[protein] + ATP = O-phospho-L-seryl-[protein] + ADP + H(+). The enzyme catalyses L-threonyl-[protein] + ATP = O-phospho-L-threonyl-[protein] + ADP + H(+). Functionally, regulatory subunit of the PI3K complex that mediates formation of phosphatidylinositol 3-phosphate; different complex forms are believed to play a role in multiple membrane trafficking pathways: PI3KC3-C1 is involved in initiation of autophagosomes and PI3KC3-C2 in maturation of autophagosomes and endocytosis. Involved in regulation of degradative endocytic trafficking and cytokinesis, probably in the context of PI3KC3-C2. The sequence is that of Phosphoinositide 3-kinase regulatory subunit 4 (Pik3r4) from Mus musculus (Mouse).